We begin with the raw amino-acid sequence, 99 residues long: Putative endopeptidase RzpR (99 aa).

The sequence is that of Putative endopeptidase RzpR (rzpR) from Escherichia coli (strain K12).